The sequence spans 467 residues: Chromosomal replication initiator protein DnaA (467 aa).

The segment at 1-87 (MSSSLWLQCL…VGSRPVVAPK (87 aa)) is domain I, interacts with DnaA modulators. The tract at residues 87–130 (KPAPVRTAADVAAESSAPAQLAQRKPIHKTWDDDSAAADITHRS) is domain II. A domain III, AAA+ region region spans residues 131–347 (NVNPKHKFNN…GALNRVIANA (217 aa)). Residues G175, G177, K178, and T179 each coordinate ATP. The domain IV, binds dsDNA stretch occupies residues 348–467 (NFTGRPITID…YSNLIRTLSS (120 aa)).

The protein belongs to the DnaA family. As to quaternary structure, oligomerizes as a right-handed, spiral filament on DNA at oriC.

It is found in the cytoplasm. Its function is as follows. Plays an essential role in the initiation and regulation of chromosomal replication. ATP-DnaA binds to the origin of replication (oriC) to initiate formation of the DNA replication initiation complex once per cell cycle. Binds the DnaA box (a 9 base pair repeat at the origin) and separates the double-stranded (ds)DNA. Forms a right-handed helical filament on oriC DNA; dsDNA binds to the exterior of the filament while single-stranded (ss)DNA is stabiized in the filament's interior. The ATP-DnaA-oriC complex binds and stabilizes one strand of the AT-rich DNA unwinding element (DUE), permitting loading of DNA polymerase. After initiation quickly degrades to an ADP-DnaA complex that is not apt for DNA replication. Binds acidic phospholipids. The protein is Chromosomal replication initiator protein DnaA of Vibrio cholerae serotype O1 (strain ATCC 39315 / El Tor Inaba N16961).